A 334-amino-acid chain; its full sequence is Geminin coiled-coil domain-containing protein 1 (334 aa).

Positions 82–119 (SQLYRNKQLQDTLVQKEEELARLHEENNHLRQYLNSAL) form a coiled coil. The interval 143–167 (FRKGKRKSKEQRYSPAEIPHPKNAK) is disordered.

Belongs to the GEMC1 family. In terms of processing, highly phosphorylated by CDK2; stimulates initiation of DNA replication.

The protein resides in the nucleus. In terms of biological role, regulator of DNA replication. Promotes initiation of chromosomal DNA replication by mediating TOPBP1- and CDK2-dependent recruitment of CDC45L onto replication origins. This is Geminin coiled-coil domain-containing protein 1 (GMNC) from Homo sapiens (Human).